We begin with the raw amino-acid sequence, 1263 residues long: Topoisomerase 1-associated factor 1 (1263 aa).

Disordered stretches follow at residues 1042-1098 (ERQL…DDSQ) and 1178-1263 (VEES…DEEE). Residues 1060 to 1071 (TKGKARKKSKEK) show a composition bias toward basic residues. The span at 1179–1189 (EESDNDDEVEE) shows a compositional bias: acidic residues. The span at 1211-1226 (VDTQQDLSDNTSNTSD) shows a compositional bias: polar residues.

The protein belongs to the timeless family. As to quaternary structure, component of the fork protection complex (FPC) consisting of TOF1 and CSM3.

The protein resides in the nucleus. Forms a fork protection complex (FPC) with CSM3 and which is required for chromosome segregation during meiosis and DNA damage repair. FPC coordinates leading and lagging strand synthesis and moves with the replication fork. FPC stabilizes replication forks in a configuration that is recognized by replication checkpoint sensors. This is Topoisomerase 1-associated factor 1 (YBL053) from Candida albicans (strain SC5314 / ATCC MYA-2876) (Yeast).